Reading from the N-terminus, the 1209-residue chain is Calcium-activated potassium channel subunit alpha-1 (1209 aa).

Residues 1 to 26 (MANGGGGGGGGSSGSSGGGGGGGGGE) show a composition bias toward gly residues. Disordered stretches follow at residues 1–29 (MANG…ETAL) and 42–64 (LDAS…SVHE). Residues 1-87 (MANGGGGGGG…VPCDSRGQRM (87 aa)) lie on the Extracellular side of the membrane. Residues 45-61 (SSSSSSSSSSSSSSSSS) show a composition bias toward low complexity. Residues 88–108 (WWAFLASSMVTFFGGLFIILL) form a helical membrane-spanning segment. Residues 109 to 179 (WRTLKYLWTV…MISAQTLTGR (71 aa)) are Cytoplasmic-facing. 3 S-palmitoyl cysteine lipidation sites follow: Cys119, Cys120, and Cys122. A helical membrane pass occupies residues 180 to 200 (VLVVLVFALSIGALVIYFIDS). Topologically, residues 201 to 215 (SNPIESCQNFYKDFT) are extracellular. A helical membrane pass occupies residues 216-236 (LQIDMAFNVFFLLYFGLRFIA). The Cytoplasmic segment spans residues 237–240 (ANDK). A helical membrane pass occupies residues 241 to 261 (LWFWLEVNSVVDFFTVPPVFV). Topologically, residues 262–265 (SVYL) are extracellular. Residues 266–286 (NRSWLGLRFLRALRLIQFSEI) form a helical; Voltage-sensor membrane-spanning segment. At 287 to 301 (LQFLNILKTSNSIKL) the chain is on the cytoplasmic side. A helical membrane pass occupies residues 302–322 (VNLLSIFISTWLTAAGFIHLV). Topologically, residues 323–336 (ENSGDPWENFQNNQ) are extracellular. An intramembrane region (pore-forming) is located at residues 337–359 (ALTYWECVYLLMVTMSTVGYGDV). Residues 353–356 (TVGY) carry the Selectivity for potassium motif. Residues 360-368 (YAKTTLGRL) lie on the Extracellular side of the membrane. A helical membrane pass occupies residues 369 to 389 (FMVFFILGGLAMFASYVPEII). Residues 390–1209 (ELIGNRKKYG…DKQKKEMVYR (820 aa)) are Cytoplasmic-facing. An RCK N-terminal 1 domain is found at 408–550 (RKHIVVCGHI…WNWKEGDDAI (143 aa)). Positions 440, 463, and 465 each coordinate Mg(2+). The interval 557–577 (LGFIAQSCLAQGLSTMLANLF) is segment S7. The segment at 614–634 (LSFPTVCELCFVKLKLLMIAI) is segment S8. Residues 682 to 686 (CKACH) form a heme-binding motif region. A disordered region spans residues 704 to 734 (EDEQPPTLSPKKKQRNGGMRNSPNTSPKLMR). Residue Thr710 is modified to Phosphothreonine. Residues Ser712, Ser725, and Ser729 each carry the phosphoserine modification. The tract at residues 784 to 804 (VLSGHVVVCIFGDVSSALIGL) is segment S9. Positions 786 to 930 (SGHVVVCIFG…MDRSSPDNSP (145 aa)) constitute an RCK N-terminal 2 domain. Thr917 bears the Phosphothreonine mark. Phosphoserine is present on residues Ser925 and Ser929. The Calcium bowl motif lies at 977–999 (TELVNDTNVQFLDQDDDDDPDTE). The Ca(2+) site is built by Gln986, Asp989, Asp992, and Asp994. Residues 1006–1026 (FACGTAFAVSVLDSLMSATYF) are segment S10. The span at 1160 to 1185 (RASLSHSSHSSQSSSKKSSSVHSIPS) shows a compositional bias: low complexity. The segment at 1160 to 1209 (RASLSHSSHSSQSSSKKSSSVHSIPSTANRPNRPKSRESRDKQKKEMVYR) is disordered. The span at 1194-1209 (KSRESRDKQKKEMVYR) shows a compositional bias: basic and acidic residues. Phosphoserine occurs at positions 1195 and 1198.

It belongs to the potassium channel family. Calcium-activated (TC 1.A.1.3) subfamily. KCa1.1/KCNMA1 sub-subfamily. As to quaternary structure, homotetramer; which constitutes the calcium-activated potassium channel. Interacts with beta subunits KCNMB1, KCNMB2, KCNMB3 and KCNMB4. Interacts with gamma subunits LRRC26, LRRC38, LRRC52 and LRRC55. Beta and gamma subunits are accessory, and modulate its activity. Interacts with RAB11B. In terms of processing, phosphorylated. Phosphorylation by kinases such as PKA and/or PKG. In smooth muscles, phosphorylation affects its activity. Palmitoylation by ZDHHC22 and ZDHHC23 within the intracellular linker between the S0 and S1 transmembrane domains regulates localization to the plasma membrane. Depalmitoylated by LYPLA1 and LYPLAL1, leading to retard exit from the trans-Golgi network.

It localises to the cell membrane. Its subcellular location is the endoplasmic reticulum membrane. The catalysed reaction is K(+)(in) = K(+)(out). Its activity is regulated as follows. Ethanol and carbon monoxide-bound heme increase channel activation. Heme inhibits channel activation. Potassium channel activated by both membrane depolarization or increase in cytosolic Ca(2+) that mediates export of K(+). It is also activated by the concentration of cytosolic Mg(2+). Its activation dampens the excitatory events that elevate the cytosolic Ca(2+) concentration and/or depolarize the cell membrane. It therefore contributes to repolarization of the membrane potential. Plays a key role in controlling excitability in a number of systems, such as regulation of the contraction of smooth muscle, the tuning of hair cells in the cochlea, regulation of transmitter release, and innate immunity. In smooth muscles, its activation by high level of Ca(2+), caused by ryanodine receptors in the sarcoplasmic reticulum, regulates the membrane potential. In cochlea cells, its number and kinetic properties partly determine the characteristic frequency of each hair cell and thereby helps to establish a tonotopic map. Kinetics of KCNMA1 channels are determined by alternative splicing, phosphorylation status and its combination with modulating beta subunits. Highly sensitive to both iberiotoxin (IbTx) and charybdotoxin (CTX). In terms of biological role, potassium channel activated by both membrane depolarization or increase in cytosolic Ca(2+) that mediates export of K(+). This is Calcium-activated potassium channel subunit alpha-1 (Kcnma1) from Rattus norvegicus (Rat).